Reading from the N-terminus, the 336-residue chain is tRNA N6-adenosine threonylcarbamoyltransferase (336 aa).

Residues His-114 and His-118 each coordinate Fe cation. Residues 136 to 140 (LVSGG), Asp-169, Gly-182, Asp-186, and Asn-275 each bind substrate. Asp-301 lines the Fe cation pocket.

The protein belongs to the KAE1 / TsaD family. Fe(2+) is required as a cofactor.

Its subcellular location is the cytoplasm. The catalysed reaction is L-threonylcarbamoyladenylate + adenosine(37) in tRNA = N(6)-L-threonylcarbamoyladenosine(37) in tRNA + AMP + H(+). In terms of biological role, required for the formation of a threonylcarbamoyl group on adenosine at position 37 (t(6)A37) in tRNAs that read codons beginning with adenine. Is involved in the transfer of the threonylcarbamoyl moiety of threonylcarbamoyl-AMP (TC-AMP) to the N6 group of A37, together with TsaE and TsaB. TsaD likely plays a direct catalytic role in this reaction. This chain is tRNA N6-adenosine threonylcarbamoyltransferase, found in Streptococcus pneumoniae (strain P1031).